We begin with the raw amino-acid sequence, 407 residues long: Glycolate oxidase iron-sulfur subunit (407 aa).

2 consecutive 4Fe-4S ferredoxin-type domains span residues 14–47 (RALE…ELDG) and 66–95 (LKTQ…HNLL). 8 residues coordinate [4Fe-4S] cluster: C25, C28, C31, C35, C75, C78, C81, and C85.

As to quaternary structure, the glycolate oxidase likely consists of three subunits, GlcD, GlcE and GlcF. The cofactor is [4Fe-4S] cluster.

It localises to the cell inner membrane. The enzyme catalyses glycolate + A = glyoxylate + AH2. It carries out the reaction (R)-lactate + A = pyruvate + AH2. In vitro the glycolate oxidase activity is inhibited by the sulfhydryl inhibitors CuSO4 and PCMB, by KCN, but not by the metal complexing agent EDTA. Its function is as follows. Component of a complex that catalyzes the oxidation of glycolate to glyoxylate. Is required for E.coli to grow on glycolate as a sole source of carbon. Is also able to oxidize D-lactate ((R)-lactate) with a similar rate. Does not link directly to O(2), and 2,6-dichloroindophenol (DCIP) and phenazine methosulfate (PMS) can act as artificial electron acceptors in vitro, but the physiological molecule that functions as a primary electron acceptor during glycolate oxidation is unknown. The polypeptide is Glycolate oxidase iron-sulfur subunit (Escherichia coli (strain K12)).